The sequence spans 860 residues: Protein argonaute-2 (860 aa).

The interval 1–30 (MYSGAGPALAPPAPPPPPIQGYAFKPPPRP) is disordered. A 3'-nitrotyrosine modification is found at tyrosine 2. A compositionally biased stretch (pro residues) spans 9 to 30 (LAPPAPPPPPIQGYAFKPPPRP). A PAZ domain is found at 230 to 349 (PVIEFVCEVL…LPLEVCNIVA (120 aa)). The segment at 312-317 (YFKDRH) is interaction with guide RNA. A Phosphoserine modification is found at serine 388. The region spanning 518–819 (LVVVILPGKT…VAFRARYHLV (302 aa)) is the Piwi domain. Positions 525 to 567 (GKTPVYAEVKRVGDTVLGMATQCVQMKNVQRTTPQTLSNLWLK) are interaction with guide RNA. The segment at 588-591 (FQQP) is interaction with GW182 family members. A divalent metal cation is bound at residue aspartate 598. The tract at residues 651 to 661 (LIQFYKSTRFK) is interaction with GW182 family members. Aspartate 670 serves as a coordination point for a divalent metal cation. Proline 701 carries the 4-hydroxyproline modification. Interaction with guide RNA stretches follow at residues 710–711 (KR), 754–762 (HAGIQGTSR), and 791–813 (YVRCTRSVSIPAPAYYAHLVAFR). Residue histidine 808 coordinates a divalent metal cation. Serine 825, serine 829, serine 832, and serine 835 each carry phosphoserine.

It belongs to the argonaute family. Ago subfamily. In terms of assembly, interacts with DICER1 through its Piwi domain and with TARBP2 during assembly of the RNA-induced silencing complex (RISC). Together, DICER1, AGO2 and TARBP2 constitute the trimeric RISC loading complex (RLC), or micro-RNA (miRNA) loading complex (miRLC). Within the RLC/miRLC, DICER1 and TARBP2 are required to process precursor miRNAs (pre-miRNAs) to mature miRNAs and then load them onto AGO2. AGO2 bound to the mature miRNA constitutes the minimal RISC and may subsequently dissociate from DICER1 and TARBP2. Note however that the term RISC has also been used to describe the trimeric RLC/miRLC. The formation of RISC complexes containing siRNAs rather than miRNAs appears to occur independently of DICER1. Interacts with AGO1. Also interacts with DDB1, DDX5, DDX6, DDX20, DHX30, DHX36, DDX47, DHX9, ELAVL, FXR1, GEMIN4, HNRNPF, IGF2BP1, ILF3, IMP8, MATR3, PABPC1, PRMT5, P4HA1, P4HB, RBM4, SART3, TNRC6A, TNRC6B, UPF1 and YBX1. Interacts with the P-body components DCP1A and XRN1. Associates with polysomes and messenger ribonucleoproteins (mNRPs). Interacts with RBM4; the interaction is modulated under stress-induced conditions, occurs under both cell proliferation and differentiation conditions and in an RNA- and phosphorylation-independent manner. Interacts with LIMD1, WTIP and AJUBA. Interacts with TRIM71; the interaction increases in presence of RNA. Interacts with APOBEC3G in an RNA-dependent manner. Interacts with APOBEC3A, APOBEC3C, APOBEC3F and APOBEC3H. Interacts with DICER1, TARBP2, EIF6, MOV10 and RPL7A (60S ribosome subunit); they form a large RNA-induced silencing complex (RISC). Interacts with FMR1. Interacts with ZFP36. Interacts with RC3H1; the interaction is RNA independent. Found in a complex composed of AGO2, CHD7 and ARB2A. Interacts with SND1 and SYT11. Interacts with CLNK. Interacts with GARRE1. Interacts with GRB2; this interaction is important for the formation of a ternary complex containing GRB2, AGO2 and DICER1. Mg(2+) is required as a cofactor. Requires Mn(2+) as cofactor. Post-translationally, hydroxylated. 4-hydroxylation appears to enhance protein stability but is not required for miRNA-binding or endonuclease activity. In terms of processing, ubiquitinated on surface-exposed lysines by a SCF-like E3 ubiquitin-protein ligase complex containing ZSWIM8 during target-directed microRNA degradation (TDMD), a process that mediates degradation of microRNAs (miRNAs). Ubiquitination by the SCF-like E3 ubiquitin-protein ligase complex containing ZSWIM8 leads to its subsequent degradation, thereby exposing miRNAs for degradation. ZSWIM8 recognizes and binds AGO2 when it is engaged with a TDMD target. Phosphorylation at Ser-388 by AKT3; leads to up-regulate translational repression of microRNA target and down-regulate endonucleolytic cleavage. Post-translationally, a phosphorylation cycle of C-terminal serine cluster (Ser-825-Ser-835) regulates the release of target mRNAs. Target-binding leads to phosphorylation of these residues by CSNK1A1, which reduces the affinity of AGO2 for mRNA and enables target release. The ANKRD52-PPP6C phosphatase complex dephosphorylates the residues, which primes AGO2 for binding a new target.

It localises to the cytoplasm. Its subcellular location is the P-body. The protein localises to the nucleus. The catalysed reaction is Endonucleolytic cleavage to 5'-phosphomonoester.. Its function is as follows. Required for RNA-mediated gene silencing (RNAi) by the RNA-induced silencing complex (RISC). The 'minimal RISC' appears to include AGO2 bound to a short guide RNA such as a microRNA (miRNA) or short interfering RNA (siRNA). These guide RNAs direct RISC to complementary mRNAs that are targets for RISC-mediated gene silencing. The precise mechanism of gene silencing depends on the degree of complementarity between the miRNA or siRNA and its target. Binding of RISC to a perfectly complementary mRNA generally results in silencing due to endonucleolytic cleavage of the mRNA specifically by AGO2. Binding of RISC to a partially complementary mRNA results in silencing through inhibition of translation, and this is independent of endonuclease activity. May inhibit translation initiation by binding to the 7-methylguanosine cap, thereby preventing the recruitment of the translation initiation factor eIF4-E. May also inhibit translation initiation via interaction with EIF6, which itself binds to the 60S ribosomal subunit and prevents its association with the 40S ribosomal subunit. The inhibition of translational initiation leads to the accumulation of the affected mRNA in cytoplasmic processing bodies (P-bodies), where mRNA degradation may subsequently occur. In some cases RISC-mediated translational repression is also observed for miRNAs that perfectly match the 3' untranslated region (3'-UTR). Can also up-regulate the translation of specific mRNAs under certain growth conditions. Binds to the AU element of the 3'-UTR of the TNF (TNF-alpha) mRNA and up-regulates translation under conditions of serum starvation. Also required for transcriptional gene silencing (TGS), in which short RNAs known as antigene RNAs or agRNAs direct the transcriptional repression of complementary promoter regions. This is Protein argonaute-2 (AGO2) from Bos taurus (Bovine).